Reading from the N-terminus, the 906-residue chain is MANFYPDFLNMQPPPNYVAGLGRGATGFTTRSDLGPAQELPSQESIKAAIEQRKSEIEEEEDIDPRYQDPDNEVALFATAPYDHEDEEADKIYQSVEEHLSKRRKSQREKQEQLQKEKYEKENPKVSSQFADLKRGLSTLTDEDWNNIPEPGDLTRKKRTKQPRRERFYATSDFVLASARNENQAISNFAVDTQAGTETPDMNGTKTNFVEIGAARDKVLGIKLAQASSNLTSPSTIDPKGYLTSLNSMVPKNANDLGDIRKARKLLQSVIETNPKHASGWVAAARLEEVANKLSQAQSLILKGCENCSRSEDVWLEAIRLHPAAEAKVIIANAVKKLPKSVTLWLEAEKLENQAQHKKRIIKKALEFNPTSVSLWKEAVNLEEEVDNARILLARAVELIPMSIDLWLALARLETYENAKKVLNKARQTIRTSHEVWIAAARLEEQQGNVSRVEKIMARGVSELQATGGMLQRDQWLSEAEKCETEGAVITAQAIINTCLGVGLDEEDQFDTWLDDAQSFIARKCIDCARAVFAFSLRVYPKSEKLWLRAVELEKLYGTTESVCSILEKAVESCPKAEILWLLYAKERKNVNDIAGARNILGRAFEYNSNSEEIWLAAVRIEFVNNENERARKLLARARIESGTERIWTKSISLERILDEKDRALQLLENALKIYPHYDKLYMMKGQIFEDKEQIELARDAYLAGTKVCPYSIPLWLLLAKLEEKQSVIRARVVFDRAKVKNPKNEFLWLELIKMELRAGNISQVRAALAKALQECPSSGLLWTEAIWLEPRAQRKTRATDALRKCEGNAHLLCTIARMLWLEKKADKARSWFLKAVKADQDNGDVWCWFYKYSLEAGNEDQQKEVLTSFETADPHHGYFWPSITKDIKNSRKTPQELLHLAINVL.

Disordered stretches follow at residues 50–129 and 142–164; these read IEQR…VSSQ and DEDW…KQPR. The span at 108–124 shows a compositional bias: basic and acidic residues; the sequence is REKQEQLQKEKYEKENP. Ser-235 carries the phosphoserine modification. 11 HAT repeats span residues 258 to 290, 322 to 353, 354 to 384, 385 to 416, 524 to 556, 558 to 590, 592 to 624, 693 to 725, 726 to 758, 760 to 792, and 824 to 856; these read GDIR…LEEV, HPAA…KLEN, QAQH…NLEE, EVDN…LETY, KCID…LEKL, GTTE…ERKN, NDIA…IEFV, EQIE…LEEK, QSVI…MELR, GNIS…LEPR, and KKAD…YSLE.

As to quaternary structure, interacts with brr2 and spp42.

The protein localises to the nucleus. In terms of biological role, involved in pre-mRNA splicing. Interacts with prp6 and prp13. May also be involved in the regulation of the G0-G1/G2 transition. Required for pre-spliceosome formation, which is the first step of pre-mRNA splicing. This protein is associated with snRNP U5. Has a role in branch site-3' splice site selection. Associates with the branch site-3' splice 3'-exon region. This chain is Pre-mRNA-splicing factor prp1 (prp1), found in Schizosaccharomyces pombe (strain 972 / ATCC 24843) (Fission yeast).